The sequence spans 638 residues: MNLSDLSHPNQLRDLSVSQLGRLAQQIRDKHLQTVAATGGHLGPGLGVVELTLALYKTLDLDRDRVVWDVGHQAYPHKMLTGRYANFHTLRQKDGLAGYLKRAESPFDCWGAGHASTSISAALGMALARDFQGLNRKVVAIIGDGALTGGMALEALNHAGHLSKTNLMVILNDNEMSISENVGGLSLYLNRLRTDPALRQIRSNLETQLRNIPLVGPTFSPEFERFKDTVKYMTMTRSKAGVIFEELGFTYLGPIDGHNLGDLIETFEFAHSLPGPVFLHAITVKGKGYEVAEQNQIKYHAQSAFDLATGKAKPASKPTPPAYTSVFAQTLVKLAEQNEKIVGITAAMPTGTGLDKFKERFADRYFDVGIAEQHAVTMAAGLAADGMRPVAAIYSTFLQRAFDQIIHDVAIQDLPVFFCLDRAGVVGEDGPTHHGVFDLAYLRQIPGLVVMAPKDEAELQRMMVTGIQYTKGPIAVRYPRGSGSGAPLMAEGWDPVPIGKAEVLRSGDDLLIVAIGTMVHPSLQAAALLSEHGIDATVVNARFAKPLDTELLLPLARRIGRVVTVEEGCRMGGFGSAVLEALMDGGIAVPTLRIGIDDKFVTHAGRSQLLDLLGLTPSGIAKTIRESLSTEPVSAPRA.

Thiamine diphosphate is bound by residues H72 and 113–115 (GHA). A Mg(2+)-binding site is contributed by D144. Residues 145 to 146 (GA), N174, Y289, and E372 each bind thiamine diphosphate. N174 is a Mg(2+) binding site.

This sequence belongs to the transketolase family. DXPS subfamily. Homodimer. It depends on Mg(2+) as a cofactor. The cofactor is thiamine diphosphate.

The catalysed reaction is D-glyceraldehyde 3-phosphate + pyruvate + H(+) = 1-deoxy-D-xylulose 5-phosphate + CO2. It participates in metabolic intermediate biosynthesis; 1-deoxy-D-xylulose 5-phosphate biosynthesis; 1-deoxy-D-xylulose 5-phosphate from D-glyceraldehyde 3-phosphate and pyruvate: step 1/1. Catalyzes the acyloin condensation reaction between C atoms 2 and 3 of pyruvate and glyceraldehyde 3-phosphate to yield 1-deoxy-D-xylulose-5-phosphate (DXP). This Gloeobacter violaceus (strain ATCC 29082 / PCC 7421) protein is 1-deoxy-D-xylulose-5-phosphate synthase.